Reading from the N-terminus, the 387-residue chain is GTPase Obg (387 aa).

One can recognise an Obg domain in the interval 1–159 (MKFVDEVEIR…RSLKLELLLL (159 aa)). Residues 160–333 (ADVGLLGLPN…LTQKVMTFIE (174 aa)) enclose the OBG-type G domain. Residues 166-173 (GLPNAGKS), 191-195 (FTTLV), 213-216 (DIPG), 283-286 (NKLD), and 314-316 (SAF) contribute to the GTP site. Residues Ser-173 and Thr-193 each coordinate Mg(2+). Residues 361–387 (AAHSQDDDLDDDDWDEDDYDVEVEYRQ) are disordered. Residues 367–387 (DDLDDDDWDEDDYDVEVEYRQ) show a composition bias toward acidic residues.

This sequence belongs to the TRAFAC class OBG-HflX-like GTPase superfamily. OBG GTPase family. In terms of assembly, monomer. Mg(2+) serves as cofactor.

The protein resides in the cytoplasm. An essential GTPase which binds GTP, GDP and possibly (p)ppGpp with moderate affinity, with high nucleotide exchange rates and a fairly low GTP hydrolysis rate. Plays a role in control of the cell cycle, stress response, ribosome biogenesis and in those bacteria that undergo differentiation, in morphogenesis control. In Colwellia psychrerythraea (strain 34H / ATCC BAA-681) (Vibrio psychroerythus), this protein is GTPase Obg.